The following is a 676-amino-acid chain: RNA helicase NPH-II (676 aa).

In terms of domain architecture, Helicase ATP-binding spans 172–347; that stretch reads FSAWISHRPV…VFLPNPAFIH (176 aa). Position 185–192 (185–192) interacts with ATP; that stretch reads GGTGVGKT. The DEXH box signature appears at 296-299; that stretch reads DEVH. One can recognise a Helicase C-terminal domain in the interval 366–535; it reads NPSSRMAYIE…NYILYANKFN (170 aa).

It belongs to the DEAD box helicase family. DEAH subfamily. Monomer.

It is found in the virion. It carries out the reaction ATP + H2O = ADP + phosphate + H(+). Functionally, NTP-dependent helicase that catalyzes unidirectional unwinding of 3'tailed duplex RNAs and plays an important role during transcription of early mRNAs, presumably by preventing R-loop formation behind the elongating RNA polymerase. Might also play a role in the export of newly synthesized mRNA chains out of the core into the cytoplasm. Required for replication and propagation of viral particles. The protein is RNA helicase NPH-II (OPG084) of Vaccinia virus (strain Copenhagen) (VACV).